The primary structure comprises 261 residues: MEVVIVPDAKAGGELIAEAMAQLLRRKPDALLGVATGSTPLPVYEALAAKVRSGAVDTAQARIAQLDEYVGLPAEHPESYRSVLRREVLEPLGIDMDAFMGPDGTAADVQAACEAYDTALGGSGGVDLQLLGIGTDGHIGFNEPCSSLASRTRIKTLTEQTRIDNARFFDGDIEQVPHHVITQGIGTILEARHVVLLATGEGKADAVAASVEGPVAAVCPASALQLHPHATVVVDEAAASKLKLADYFRHTYAHKPDWQGI.

D67 functions as the Proton acceptor; for enolization step in the catalytic mechanism. The active-site For ring-opening step is D136. Catalysis depends on H138, which acts as the Proton acceptor; for ring-opening step. The active-site For ring-opening step is the E143.

The protein belongs to the glucosamine/galactosamine-6-phosphate isomerase family. NagB subfamily.

It carries out the reaction alpha-D-glucosamine 6-phosphate + H2O = beta-D-fructose 6-phosphate + NH4(+). The protein operates within amino-sugar metabolism; N-acetylneuraminate degradation; D-fructose 6-phosphate from N-acetylneuraminate: step 5/5. Its function is as follows. Catalyzes the reversible isomerization-deamination of glucosamine 6-phosphate (GlcN6P) to form fructose 6-phosphate (Fru6P) and ammonium ion. The sequence is that of Glucosamine-6-phosphate deaminase from Streptomyces coelicolor (strain ATCC BAA-471 / A3(2) / M145).